We begin with the raw amino-acid sequence, 78 residues long: UPF0154 protein SSU98_1719 (78 aa).

A helical transmembrane segment spans residues 3–23 (LGLAILLIVLAFAGGVALGIY).

Belongs to the UPF0154 family.

Its subcellular location is the cell membrane. This chain is UPF0154 protein SSU98_1719, found in Streptococcus suis (strain 98HAH33).